The chain runs to 660 residues: DNA mismatch repair protein MutL (660 aa).

Belongs to the DNA mismatch repair MutL/HexB family.

In terms of biological role, this protein is involved in the repair of mismatches in DNA. It is required for dam-dependent methyl-directed DNA mismatch repair. May act as a 'molecular matchmaker', a protein that promotes the formation of a stable complex between two or more DNA-binding proteins in an ATP-dependent manner without itself being part of a final effector complex. The protein is DNA mismatch repair protein MutL of Solibacter usitatus (strain Ellin6076).